Reading from the N-terminus, the 208-residue chain is dITP/XTP pyrophosphatase (208 aa).

Substrate is bound at residue 11–16; it reads SRNWKK. Asp76 serves as the catalytic Proton acceptor. Asp76 contributes to the Mg(2+) binding site. Substrate contacts are provided by residues Ser77, 158 to 161, Lys184, and 189 to 190; these read FGYD and HR.

This sequence belongs to the HAM1 NTPase family. In terms of assembly, homodimer. Requires Mg(2+) as cofactor.

It catalyses the reaction XTP + H2O = XMP + diphosphate + H(+). The enzyme catalyses dITP + H2O = dIMP + diphosphate + H(+). The catalysed reaction is ITP + H2O = IMP + diphosphate + H(+). Functionally, pyrophosphatase that catalyzes the hydrolysis of nucleoside triphosphates to their monophosphate derivatives, with a high preference for the non-canonical purine nucleotides XTP (xanthosine triphosphate), dITP (deoxyinosine triphosphate) and ITP. Seems to function as a house-cleaning enzyme that removes non-canonical purine nucleotides from the nucleotide pool, thus preventing their incorporation into DNA/RNA and avoiding chromosomal lesions. This chain is dITP/XTP pyrophosphatase, found in Mycobacterium leprae (strain TN).